We begin with the raw amino-acid sequence, 285 residues long: 2-dehydro-3-deoxyphosphooctonate aldolase (285 aa).

The protein belongs to the KdsA family.

It is found in the cytoplasm. The enzyme catalyses D-arabinose 5-phosphate + phosphoenolpyruvate + H2O = 3-deoxy-alpha-D-manno-2-octulosonate-8-phosphate + phosphate. The protein operates within carbohydrate biosynthesis; 3-deoxy-D-manno-octulosonate biosynthesis; 3-deoxy-D-manno-octulosonate from D-ribulose 5-phosphate: step 2/3. It participates in bacterial outer membrane biogenesis; lipopolysaccharide biosynthesis. In Variovorax paradoxus (strain S110), this protein is 2-dehydro-3-deoxyphosphooctonate aldolase.